The sequence spans 142 residues: Large ribosomal subunit protein uL13 (142 aa).

The protein belongs to the universal ribosomal protein uL13 family. In terms of assembly, part of the 50S ribosomal subunit.

Its function is as follows. This protein is one of the early assembly proteins of the 50S ribosomal subunit, although it is not seen to bind rRNA by itself. It is important during the early stages of 50S assembly. This is Large ribosomal subunit protein uL13 from Actinobacillus succinogenes (strain ATCC 55618 / DSM 22257 / CCUG 43843 / 130Z).